Here is a 251-residue protein sequence, read N- to C-terminus: 5'-nucleotidase SurE (251 aa).

Residues D8, D9, S39, and N90 each contribute to the a divalent metal cation site.

The protein belongs to the SurE nucleotidase family. Requires a divalent metal cation as cofactor.

The protein localises to the cytoplasm. The catalysed reaction is a ribonucleoside 5'-phosphate + H2O = a ribonucleoside + phosphate. Its function is as follows. Nucleotidase that shows phosphatase activity on nucleoside 5'-monophosphates. The sequence is that of 5'-nucleotidase SurE from Colwellia psychrerythraea (strain 34H / ATCC BAA-681) (Vibrio psychroerythus).